The chain runs to 225 residues: Glucosyl-3-phosphoglycerate phosphatase (225 aa).

Arg-10 contributes to the substrate binding site. The active-site Tele-phosphohistidine intermediate is the His-11. Position 60 (Arg-60) interacts with substrate. The Proton donor/acceptor role is filled by Glu-84. His-158 serves as a coordination point for substrate.

The protein belongs to the phosphoglycerate mutase family. Homodimer.

The catalysed reaction is (2R)-2-O-(alpha-D-glucopyranosyl)-3-phospho-glycerate + H2O = (2R)-2-O-(alpha-D-glucopyranosyl)-glycerate + phosphate. Functionally, involved in the biosynthesis of mycobacterial methylglucose lipopolysaccharides (MGLP). Catalyzes the dephosphorylation of glucosyl-3-phosphoglycerate (GPG) to glucosylglycerate. This chain is Glucosyl-3-phosphoglycerate phosphatase, found in Mycolicibacterium vanbaalenii (strain DSM 7251 / JCM 13017 / BCRC 16820 / KCTC 9966 / NRRL B-24157 / PYR-1) (Mycobacterium vanbaalenii).